The sequence spans 314 residues: MKDLFILSGPTAVGKTEISLNLAKALRGEVISSDSMQIYKHMDIGSAKIFEEERQGIPHHLIDVVEPWENFSVAEYKNIAENKIEEIYNRDNIPMLVGGTGLYINSIIYNYSFTDANKDNDYRDYLEKLAKEKGKEYIHSLLKDIDEYSYNNLHYNNLKRVIRALEVYKVTGKPMSQYAKEEKENLFNIPYSIYYFVLYMDRDKLYDKINMRVDRMLQEGLLDEVKELKEMGCNETMQSMQGIGYKELLYYLNGEISFNEAVYLIKKGSRNYAKRQLTWFRRDPRAIWINKDEFENDDAIVKEILNKFNKLKGF.

Position 9 to 16 (9 to 16 (GPTAVGKT)) interacts with ATP. 11–16 (TAVGKT) provides a ligand contact to substrate. An interaction with substrate tRNA region spans residues 34–37 (DSMQ).

This sequence belongs to the IPP transferase family. As to quaternary structure, monomer. Mg(2+) is required as a cofactor.

It catalyses the reaction adenosine(37) in tRNA + dimethylallyl diphosphate = N(6)-dimethylallyladenosine(37) in tRNA + diphosphate. In terms of biological role, catalyzes the transfer of a dimethylallyl group onto the adenine at position 37 in tRNAs that read codons beginning with uridine, leading to the formation of N6-(dimethylallyl)adenosine (i(6)A). The protein is tRNA dimethylallyltransferase of Clostridium tetani (strain Massachusetts / E88).